The following is a 174-amino-acid chain: Shikimate kinase 2 (174 aa).

Position 12–17 (12–17 (GAGKTT)) interacts with ATP. Thr-16 and Asp-32 together coordinate Mg(2+). The substrate site is built by Asp-34, Arg-58, and Gly-79. The interval 112-126 (AEDPEDAQRPSLTGK) is LID domain. Arg-120 contributes to the ATP binding site. Arg-139 provides a ligand contact to substrate. Gln-155 serves as a coordination point for ATP.

Belongs to the shikimate kinase family. AroL subfamily. Monomer. Mg(2+) serves as cofactor.

The protein resides in the cytoplasm. The enzyme catalyses shikimate + ATP = 3-phosphoshikimate + ADP + H(+). It participates in metabolic intermediate biosynthesis; chorismate biosynthesis; chorismate from D-erythrose 4-phosphate and phosphoenolpyruvate: step 5/7. In terms of biological role, catalyzes the specific phosphorylation of the 3-hydroxyl group of shikimic acid using ATP as a cosubstrate. This Yersinia enterocolitica serotype O:8 / biotype 1B (strain NCTC 13174 / 8081) protein is Shikimate kinase 2.